The chain runs to 206 residues: MSKGSSTKKWLHEHTSDYYVIQANKLGYRSRASFKILEIQDKYQLFKPNMFVVDLGAAPGGWSEQVIKYIGKNGKLIALDLLEMAPIAGVEFIQGDFSSDETYQKLNTLVNNQKIDCVISDMAPNLSGNKTSDQAKSIYLLELALDFANTNLNKNGSFVAKVFQGQGSDEYLKLVRESFNKVIQFKPKSSRAKSREFYVIATEFKG.

Residues glycine 60, tryptophan 62, aspartate 80, aspartate 96, and aspartate 121 each contribute to the S-adenosyl-L-methionine site. Lysine 161 (proton acceptor) is an active-site residue.

This sequence belongs to the class I-like SAM-binding methyltransferase superfamily. RNA methyltransferase RlmE family.

The protein localises to the cytoplasm. It carries out the reaction uridine(2552) in 23S rRNA + S-adenosyl-L-methionine = 2'-O-methyluridine(2552) in 23S rRNA + S-adenosyl-L-homocysteine + H(+). In terms of biological role, specifically methylates the uridine in position 2552 of 23S rRNA at the 2'-O position of the ribose in the fully assembled 50S ribosomal subunit. This Francisella tularensis subsp. tularensis (strain FSC 198) protein is Ribosomal RNA large subunit methyltransferase E.